We begin with the raw amino-acid sequence, 300 residues long: 5'-adenylylsulfate reductase-like 5 (300 aa).

The first 23 residues, 1–23 (MDSRVSILFVCAIAVSCFTSGSA), serve as a signal peptide directing secretion. In terms of domain architecture, Thioredoxin spans 41 to 161 (FDLEAKCPPS…LIEFYEEATG (121 aa)). N136 carries N-linked (GlcNAc...) asparagine glycosylation. Residues 202-222 (FLVLSLLFICLQMAILVFPIA) traverse the membrane as a helical segment.

The protein localises to the membrane. The chain is 5'-adenylylsulfate reductase-like 5 (APRL5) from Arabidopsis thaliana (Mouse-ear cress).